The following is a 138-amino-acid chain: ATP synthase epsilon chain, chloroplastic (138 aa).

This sequence belongs to the ATPase epsilon chain family. F-type ATPases have 2 components, CF(1) - the catalytic core - and CF(0) - the membrane proton channel. CF(1) has five subunits: alpha(3), beta(3), gamma(1), delta(1), epsilon(1). CF(0) has three main subunits: a, b and c.

Its subcellular location is the plastid. It localises to the chloroplast thylakoid membrane. In terms of biological role, produces ATP from ADP in the presence of a proton gradient across the membrane. The chain is ATP synthase epsilon chain, chloroplastic from Huperzia lucidula (Shining clubmoss).